The following is a 564-amino-acid chain: Forkhead transcription factor HCM1 (564 aa).

Residues 33-80 are disordered; that stretch reads DEKEMITPPSSTVRKTMKEVNKRPSHPLSPDHSSPIAPSKAKRQRSDT. The segment covering 58 to 67 has biased composition (low complexity); it reads HPLSPDHSSP. Positions 108-199 form a DNA-binding region, fork-head; the sequence is KKPPYSYATL…KFFKGENRGY (92 aa). Over residues 224-241 the composition is skewed to acidic residues; it reads QVESGEGNDDLPDEEERE. The segment at 224-246 is disordered; the sequence is QVESGEGNDDLPDEEEREEAGKF. T342 bears the Phosphothreonine mark. Positions 401-448 are disordered; the sequence is SKPQSQQSYSNSQLPPPPSSHGSDLLKTPKMRHSDGLEKTPSRLISTP. Residues 402 to 413 show a composition bias toward polar residues; it reads KPQSQQSYSNSQ. Positions 432 to 441 are enriched in basic and acidic residues; sequence RHSDGLEKTP. A Phosphoserine modification is found at S496. Positions 536–564 are disordered; sequence SDGNNTTDSNQKHHPYHNHPSNDSGNEKN. Residues 554-564 show a composition bias toward polar residues; that stretch reads HPSNDSGNEKN.

Post-translationally, phosphorylated by CDK1.

It is found in the cytoplasm. The protein resides in the nucleus. Transcription factor regulating the cell cycle specific transcription of a spindle pole body (SPB) calmodulin binding protein SPC110. Required for full induction of SPC110 transcription in late G1. Binds to DNA consensus sequence 5'-[AT]AA[TC]AAACAA[AT]-3'. Dosage dependent suppressor of calmodulin mutants which have specific defects in SPB assembly. The sequence is that of Forkhead transcription factor HCM1 (HCM1) from Saccharomyces cerevisiae (strain ATCC 204508 / S288c) (Baker's yeast).